Consider the following 407-residue polypeptide: MRNIKIEKAVQRPIEQNEIEVVERKGIGHPDSISDGIAEAVSRVLSQTYKEKAGHVLHHNTDEVQITAGESDPKFGGGQIIKPIQILLTGRAANEFTLPSGETKKIGVDTIAIEAAKKFLQDTIINLDVEYGTVVECKIGQGSADLRDVFQRPNTIPSSNDTSFGVGYAPFSQTENLVLKTEELLNSKDFKKQYPFVGEDIKVMGLREKEDITLTIAAAFVSKYVDDVDAYLNMKDELKNIVNDLAAKETDLSVKTLINTADDETKKDESGYYLTVTGTSAEMGDDGSVGRGNRANGLITPNRPMSMEATSGKNPINHVGKIYNLLSNEITREVVSDVEGVKSIDMIILSQIGKPIDQPRTATAHIQTEEGYSINDVEEDVTRIINKWLENITDIKEFMLEGKLRTF.

140-145 (GQGSAD) contributes to the ATP binding site.

Belongs to the AdoMet synthase 2 family. Mg(2+) serves as cofactor.

It catalyses the reaction L-methionine + ATP + H2O = S-adenosyl-L-methionine + phosphate + diphosphate. The protein operates within amino-acid biosynthesis; S-adenosyl-L-methionine biosynthesis; S-adenosyl-L-methionine from L-methionine: step 1/1. Its function is as follows. Catalyzes the formation of S-adenosylmethionine from methionine and ATP. The sequence is that of S-adenosylmethionine synthase from Methanosphaera stadtmanae (strain ATCC 43021 / DSM 3091 / JCM 11832 / MCB-3).